The sequence spans 241 residues: Major prion protein (241 aa).

Residues 1–15 (MLVLFVATWSDLGLC) form the signal peptide. The interval 16–31 (KKRPKPGGWNTGGSRY) is interaction with ADGRG6. Residues 16–223 (KKRPKPGGWN…ESQAYYQRGS (208 aa)) are interaction with GRB2, ERI3 and SYN1. The segment at 18–100 (RPKPGGWNTG…QWNKPSKPKT (83 aa)) is disordered. 5 consecutive repeat copies span residues 44–52 (PQGGGSWGQ), 53–60 (PHGGGWGQ), 61–68 (PHGGGWGQ), 69–76 (PHGGGWGQ), and 77–84 (PHGGGWGQ). The tract at residues 44–84 (PQGGGSWGQPHGGGWGQPHGGGWGQPHGGGWGQPHGGGWGQ) is 5 X 8 AA tandem repeats of P-H-G-G-G-W-G-Q. Residues 45 to 88 (QGGGSWGQPHGGGWGQPHGGGWGQPHGGGWGQPHGGGWGQGGGT) show a composition bias toward gly residues. The Cu(2+) site is built by His54, Gly55, Gly56, His62, Gly63, Gly64, His70, Gly71, Gly72, His78, Gly79, and Gly80. A disulfide bridge links Cys172 with Cys207. N-linked (GlcNAc...) asparagine glycans are attached at residues Asn174 and Asn190. The GPI-anchor amidated serine moiety is linked to residue Ser223. Residues 224–241 (SMVLFSSPPVILLISFLI) constitute a propeptide, removed in mature form.

It belongs to the prion family. In terms of assembly, monomer and homodimer. Has a tendency to aggregate into amyloid fibrils containing a cross-beta spine, formed by a steric zipper of superposed beta-strands. Soluble oligomers may represent an intermediate stage on the path to fibril formation. Copper binding may promote oligomerization. Interacts with GRB2, APP, ERI3/PRNPIP and SYN1. Mislocalized cytosolically exposed PrP interacts with MGRN1; this interaction alters MGRN1 subcellular location and causes lysosomal enlargement. Interacts with APP. Interacts with KIAA1191. Interacts with ADGRG6.

The protein localises to the cell membrane. Its subcellular location is the golgi apparatus. Its primary physiological function is unclear. May play a role in neuronal development and synaptic plasticity. May be required for neuronal myelin sheath maintenance. May promote myelin homeostasis through acting as an agonist for ADGRG6 receptor. May play a role in iron uptake and iron homeostasis. Soluble oligomers are toxic to cultured neuroblastoma cells and induce apoptosis (in vitro). Association with GPC1 (via its heparan sulfate chains) targets PRNP to lipid rafts. Also provides Cu(2+) or Zn(2+) for the ascorbate-mediated GPC1 deaminase degradation of its heparan sulfate side chains. The protein is Major prion protein (PRNP) of Plecturocebus moloch (Dusky titi monkey).